The following is a 212-amino-acid chain: Adenylate kinase (212 aa).

10-15 (GAGKGT) lines the ATP pocket. The NMP stretch occupies residues 30 to 59 (ALGDIFRTIIKTSTSEAELINNYVKQGELV). AMP-binding positions include Arg-36, 57 to 59 (ELV), 85 to 88 (GYPR), and Gln-92. The segment at 122–160 (GRYSCKNCRKIYNSYFLQPKTDNVCDVCGSSTFDYRKDD) is LID. Arg-123 is an ATP binding site. The Zn(2+) site is built by Cys-126 and Cys-129. 132–133 (IY) provides a ligand contact to ATP. Zn(2+) contacts are provided by Cys-146 and Cys-149. The AMP site is built by Arg-157 and Arg-168. Lys-196 serves as a coordination point for ATP.

Belongs to the adenylate kinase family. Monomer.

The protein localises to the cytoplasm. The enzyme catalyses AMP + ATP = 2 ADP. Its pathway is purine metabolism; AMP biosynthesis via salvage pathway; AMP from ADP: step 1/1. Catalyzes the reversible transfer of the terminal phosphate group between ATP and AMP. Plays an important role in cellular energy homeostasis and in adenine nucleotide metabolism. In Rickettsia akari (strain Hartford), this protein is Adenylate kinase.